A 105-amino-acid chain; its full sequence is uncharacterized protein (105 aa).

This is an uncharacterized protein from Escherichia coli (strain K12).